The primary structure comprises 199 residues: Potassium-transporting ATPase KdpC subunit (199 aa).

Residues 21–43 traverse the membrane as a helical segment; that stretch reads LALLFVCGVVYTGTVTQLGGALF.

Belongs to the KdpC family. In terms of assembly, the system is composed of three essential subunits: KdpA, KdpB and KdpC.

The protein resides in the cell inner membrane. In terms of biological role, part of the high-affinity ATP-driven potassium transport (or Kdp) system, which catalyzes the hydrolysis of ATP coupled with the electrogenic transport of potassium into the cytoplasm. This subunit acts as a catalytic chaperone that increases the ATP-binding affinity of the ATP-hydrolyzing subunit KdpB by the formation of a transient KdpB/KdpC/ATP ternary complex. The chain is Potassium-transporting ATPase KdpC subunit from Shewanella putrefaciens (strain CN-32 / ATCC BAA-453).